A 689-amino-acid chain; its full sequence is Beta-adrenergic receptor kinase 1 (689 aa).

The interval 1–190 (MADLEAVLAD…ELNIHLTMND (190 aa)) is N-terminal. Residues 54 to 175 (TFEKIFSQKL…IESDKFTRFC (122 aa)) form the RGS domain. Residues 191–453 (FSVHRIIGRG…AQEVKESPFF (263 aa)) enclose the Protein kinase domain. Residues 197 to 205 (IGRGGFGEV) and K220 contribute to the ATP site. Residue D317 is the Proton acceptor of the active site. The AGC-kinase C-terminal domain maps to 454-521 (RSLDWQMVFL…TISERWQQEV (68 aa)). A PH domain is found at 558–652 (DCIMHGYMSK…WKKELRDAYR (95 aa)). S670 bears the Phosphoserine mark.

Belongs to the protein kinase superfamily. AGC Ser/Thr protein kinase family. GPRK subfamily. Interacts with the heterodimer formed by GNB1 and GNG2. Interacts with GIT1. Interacts with, and phosphorylates chemokine-stimulated CCR5. Interacts with ARRB1. Interacts with LPAR1 and LPAR2. Interacts with RALA in response to LPAR1 activation. ADRBK1 and RALA mutually inhibit each other's binding to LPAR1. Interacts with ADRB2. As to expression, expressed in peripheral blood leukocytes.

Its subcellular location is the cytoplasm. The protein localises to the cell membrane. It localises to the postsynapse. The protein resides in the presynapse. The enzyme catalyses [beta-adrenergic receptor] + ATP = [beta-adrenergic receptor]-phosphate + ADP + H(+). With respect to regulation, in contrast to other AGC family kinases, the catalytic activity is solely regulated by the binding of substrates and ligands, not by phosphorylation of the kinase domain. In terms of biological role, specifically phosphorylates the agonist-occupied form of the beta-adrenergic and closely related receptors, probably inducing a desensitization of them. Key regulator of LPAR1 signaling. Competes with RALA for binding to LPAR1 thus affecting the signaling properties of the receptor. Desensitizes LPAR1 and LPAR2 in a phosphorylation-independent manner. Positively regulates ciliary smoothened (SMO)-dependent Hedgehog (Hh) signaling pathway by facilitating the trafficking of SMO into the cilium and the stimulation of SMO activity. Inhibits relaxation of airway smooth muscle in response to blue light. In Homo sapiens (Human), this protein is Beta-adrenergic receptor kinase 1.